We begin with the raw amino-acid sequence, 178 residues long: Cyclin-dependent kinase inhibitor 1B (178 aa).

The segment covering 1–11 (MSNVRVSNGSP) has biased composition (polar residues). Residues 1 to 31 (MSNVRVSNGSPSLERMDARQAEYPKPSACRN) are disordered. Ser-10 bears the Phosphoserine; by UHMK1 mark. Positions 51–91 (DMEEASQRKWNFDFQNHKPLEGKYEWQEVEKGSLPEFYYRP) are interaction with CDK2. Position 74 is a phosphotyrosine; by SRC (Tyr-74). A disordered region spans residues 87 to 178 (FYYRPPRPPK…RTEENVSDGS (92 aa)). Tyr-88 bears the Phosphotyrosine; by ABL, LYN, SRC and JAK2 mark. Position 89 is a phosphotyrosine (Tyr-89). A compositionally biased stretch (polar residues) spans 104–113 (QESQDVSGTR). The segment covering 126 to 137 (EDTHLVDQKTDT) has biased composition (basic and acidic residues). The short motif at 153–169 (KRPATDDSSPQNKRANR) is the Nuclear localization signal element. Thr-157 carries the post-translational modification Phosphothreonine; by CaMK1, PKB/AKT1, RPS6KA1, RPS6KA3 and PIM1. Thr-170 carries the phosphothreonine modification.

The protein belongs to the CDI family. Forms a ternary complex composed of CCNE1, CDK2 and CDKN1B. Interacts directly with CCNE1; the interaction is inhibited by CDK2-dependent phosphorylation. Interacts with COPS5, subunit of the COP9 signalosome complex; the interaction leads to CDKN1B degradation. Interacts with NUP50; the interaction leads to nuclear import and degradation of phosphorylated CDKN1B. Interacts with CCND1 and SNX6. Interacts (Thr-198-phosphorylated form) with 14-3-3 proteins, binds strongly YWHAQ, weakly YWHAE and YWHAH, but not YWHAB nor YWHAZ; the interaction with YWHAQ results in translocation to the cytoplasm. Interacts with AKT1 and LYN; the interactions lead to cytoplasmic mislocation, phosphorylation of CDKN1B and inhibition of cell cycle arrest. Forms a ternary complex with CCNA2 and CDK2; CDKN1B inhibits the kinase activity of CDK2 through conformational rearrangements. Interacts (unphosphorylated form) with CDK2. Forms a complex with CDK2 and SPDYA, but does not directly interact with SPDYA. Forms a ternary complex composed of cyclin D, CDK4 and CDKN1B. Interacts (phosphorylated on Tyr-88 and Tyr-89) with CDK4; the interaction is required for cyclin D and CDK4 complex assembly, induces nuclear translocation and activates the CDK4 kinase activity. Interacts with GRB2. Interacts with PIM1. Identified in a complex with SKP1, SKP2 and CKS1B. Interacts with UHMK1; the interaction leads to cytoplasmic mislocation, phosphorylation of CDKN1B and inhibition of cell cycle arrest. Also interacts with CDK1. Dephosphorylated by PPM1H, leading to CDKN1B stability. In terms of processing, phosphorylated; phosphorylation occurs on serine, threonine and tyrosine residues. Phosphorylation on Ser-10 is the major site of phosphorylation in resting cells, takes place at the G(0)-G(1) phase and leads to protein stability. Phosphorylation on other sites is greatly enhanced by mitogens, growth factors, MYC and in certain cancer cell lines. The phosphorylated form found in the cytoplasm is inactivate. Phosphorylation on Tyr-88 has no effect on binding CDK complexes. Ubiquitinated; in the cytoplasm by the KPC complex (composed of RNF123/KPC1 and UBAC1/KPC2) and, in the nucleus, by SCF(SKP2). The latter requires prior phosphorylation on Thr-187. Ubiquitinated; by a TRIM21-containing SCF(SKP2)-like complex; leads to its degradation. Post-translationally, subject to degradation in the lysosome. Interaction with SNX6 promotes lysosomal degradation.

The protein resides in the nucleus. Its subcellular location is the cytoplasm. The protein localises to the endosome. Important regulator of cell cycle progression. Inhibits the kinase activity of CDK2 bound to cyclin A, but has little inhibitory activity on CDK2 bound to SPDYA. Involved in G1 arrest. Potent inhibitor of cyclin E- and cyclin A-CDK2 complexes. Forms a complex with cyclin type D-CDK4 complexes and is involved in the assembly, stability, and modulation of CCND1-CDK4 complex activation. Acts either as an inhibitor or an activator of cyclin type D-CDK4 complexes depending on its phosphorylation state and/or stoichometry. The sequence is that of Cyclin-dependent kinase inhibitor 1B (CDKN1B) from Neovison vison (American mink).